The primary structure comprises 409 residues: FADH(2)-dependent resorcinol hydroxylase, oxygenase component (409 aa).

Belongs to the HpaH/HsaA monooxygenase family. The FADH(2)-dependent resorcinol hydroxylase is composed of two subunits, GraA (the oxygenase component) and GraD (the reductase component). Both subunits are required for activity.

The enzyme catalyses resorcinol + FADH2 + O2 = benzene-1,2,4-triol + FAD + H2O + H(+). It functions in the pathway aromatic compound metabolism. Functionally, involved in the gamma-resorcylate (2,6-dihydroxybenzoate) catabolism. Oxygenase component of the resorcinol hydroxylase, which catalyzes the FADH(2)-dependent conversion of resorcinol to hydroxyquinol. The protein is FADH(2)-dependent resorcinol hydroxylase, oxygenase component of Rhizobium sp. (strain MTP-10005).